The sequence spans 463 residues: Thiamine-repressible acid phosphatase pho4 (463 aa).

The signal sequence occupies residues 1 to 18; sequence MKLSGISLWLLAASIVHA. The active-site Nucleophile is histidine 69. Residues asparagine 98, asparagine 104, asparagine 186, asparagine 221, asparagine 251, and asparagine 328 are each glycosylated (N-linked (GlcNAc...) asparagine). Aspartate 341 acts as the Proton donor in catalysis. 3 N-linked (GlcNAc...) asparagine glycosylation sites follow: asparagine 433, asparagine 439, and asparagine 458.

Belongs to the histidine acid phosphatase family.

Its subcellular location is the secreted. The protein localises to the cell wall. It carries out the reaction a phosphate monoester + H2O = an alcohol + phosphate. In terms of biological role, may dephosphorylate thiamine phosphates. This Schizosaccharomyces pombe (strain 972 / ATCC 24843) (Fission yeast) protein is Thiamine-repressible acid phosphatase pho4 (pho4).